Here is a 743-residue protein sequence, read N- to C-terminus: Glycerol-3-phosphate O-acyltransferase 2 (743 aa).

Residues 1–34 lie on the Lumenal side of the membrane; the sequence is MSAPAADHNAAKPIPHVPQASRRYKNSYNGFVYN. The helical transmembrane segment at 35-55 threads the bilayer; that stretch reads IHTWLYDVSVFLFNILFTIFF. Over 56–442 the chain is Cytoplasmic; the sequence is REIKVRGAYN…TKLEALRCFV (387 aa). Residues 443 to 457 traverse the membrane as a helical segment; sequence TLIVRLIKFSVFAIL. A topological domain (lumenal) is located at residue Ser-458. Residues 459-473 traverse the membrane as a helical segment; the sequence is LPGSILFTPIFIICR. The Cytoplasmic segment spans residues 474–501; the sequence is VYSEKKAKEGLKKSLVKIKGTDLLATWK. The chain crosses the membrane as a helical span at residues 502–522; that stretch reads LIVALILAPILYVTYSILLII. The Lumenal segment spans residues 523 to 531; the sequence is LARKQHYCR. The helical transmembrane segment at 532-552 threads the bilayer; sequence IWVPSNNAFIQFVYFYALLVF. The Cytoplasmic segment spans residues 553–743; that stretch reads TTYSSLKTGE…RQKREHEKKE (191 aa). 9 positions are modified to phosphoserine: Ser-632, Ser-637, Ser-647, Ser-651, Ser-654, Ser-657, Ser-664, Ser-668, and Ser-671. Thr-673 carries the post-translational modification Phosphothreonine. The interval 682–743 is disordered; the sequence is KQGQWKSEGE…RQKREHEKKE (62 aa). Ser-688 bears the Phosphoserine mark. Residues 691 to 700 show a composition bias toward acidic residues; the sequence is ETSEDEDEFD. The residue at position 692 (Thr-692) is a Phosphothreonine. A Phosphoserine modification is found at Ser-693.

The protein belongs to the GPAT/DAPAT family. Phosphorylated at a conserved motif involving Ser-664, Ser-668 and Ser-671. This phosphorylation plays a critical role for efficient TAG mobilization. Phosphorylation deficiency at this motif increases the enzyme activity and consequently induces de novo formation of phosphatidic acid.

It is found in the lipid droplet. The protein localises to the endoplasmic reticulum membrane. The enzyme catalyses sn-glycerol 3-phosphate + an acyl-CoA = a 1-acyl-sn-glycero-3-phosphate + CoA. It carries out the reaction dihydroxyacetone phosphate + an acyl-CoA = a 1-acylglycerone 3-phosphate + CoA. It catalyses the reaction sn-glycerol 3-phosphate + hexadecanoyl-CoA = 1-hexadecanoyl-sn-glycero-3-phosphate + CoA. The catalysed reaction is (9Z)-hexadecenoyl-CoA + sn-glycerol 3-phosphate = 1-(9Z-hexadecenoyl)-sn-glycero-3-phosphate + CoA. The enzyme catalyses sn-glycerol 3-phosphate + octadecanoyl-CoA = 1-octadecanoyl-sn-glycero-3-phosphate + CoA. It carries out the reaction sn-glycerol 3-phosphate + (9Z)-octadecenoyl-CoA = 1-(9Z-octadecenoyl)-sn-glycero-3-phosphate + CoA. Its pathway is phospholipid metabolism; CDP-diacylglycerol biosynthesis; CDP-diacylglycerol from sn-glycerol 3-phosphate: step 1/3. Dual substrate-specific glycerol-3-phosphate/dihydroxyacetone phosphate sn-1 acyltransferase, catalyzing the first and committed reaction in the de novo synthesis of glycerophospholipids and triacylglycerols (TAGs). Can use both Gly-3-P and dihydroxyacetone phosphate with similar efficiencies and has a broad fatty acyl-CoA specificity profile. Transfers a fatty acid from fatty acyl-CoA to the sn-1 position of glycerol-3-phosphate to produce lysophosphatidic acid (LysoPA). These lipids not only are precursors of glycerolipids, but also are dynamic components of signal transduction systems that control cell physiology. The chain is Glycerol-3-phosphate O-acyltransferase 2 (GPT2) from Saccharomyces cerevisiae (strain ATCC 204508 / S288c) (Baker's yeast).